Consider the following 102-residue polypeptide: Small ribosomal subunit protein uS10 (102 aa).

It belongs to the universal ribosomal protein uS10 family. Part of the 30S ribosomal subunit.

Its function is as follows. Involved in the binding of tRNA to the ribosomes. In Limosilactobacillus reuteri (strain DSM 20016) (Lactobacillus reuteri), this protein is Small ribosomal subunit protein uS10.